We begin with the raw amino-acid sequence, 425 residues long: Serine--tRNA ligase (425 aa).

Residue 233-235 coordinates L-serine; that stretch reads TAE. 264 to 266 contacts ATP; that stretch reads RRE. Glu287 provides a ligand contact to L-serine. 351–354 is an ATP binding site; it reads EISS. Residue Ser387 participates in L-serine binding.

The protein belongs to the class-II aminoacyl-tRNA synthetase family. Type-1 seryl-tRNA synthetase subfamily. In terms of assembly, homodimer. The tRNA molecule binds across the dimer.

Its subcellular location is the cytoplasm. It carries out the reaction tRNA(Ser) + L-serine + ATP = L-seryl-tRNA(Ser) + AMP + diphosphate + H(+). The catalysed reaction is tRNA(Sec) + L-serine + ATP = L-seryl-tRNA(Sec) + AMP + diphosphate + H(+). It participates in aminoacyl-tRNA biosynthesis; selenocysteinyl-tRNA(Sec) biosynthesis; L-seryl-tRNA(Sec) from L-serine and tRNA(Sec): step 1/1. In terms of biological role, catalyzes the attachment of serine to tRNA(Ser). Is also able to aminoacylate tRNA(Sec) with serine, to form the misacylated tRNA L-seryl-tRNA(Sec), which will be further converted into selenocysteinyl-tRNA(Sec). The protein is Serine--tRNA ligase of Thermotoga neapolitana (strain ATCC 49049 / DSM 4359 / NBRC 107923 / NS-E).